The sequence spans 464 residues: Argininosuccinate lyase (464 aa).

This sequence belongs to the lyase 1 family. Argininosuccinate lyase subfamily.

Its subcellular location is the cytoplasm. It catalyses the reaction 2-(N(omega)-L-arginino)succinate = fumarate + L-arginine. It participates in amino-acid biosynthesis; L-arginine biosynthesis; L-arginine from L-ornithine and carbamoyl phosphate: step 3/3. The polypeptide is Argininosuccinate lyase (Moorella thermoacetica (strain ATCC 39073 / JCM 9320)).